Reading from the N-terminus, the 536-residue chain is Phosphoenolpyruvate carboxykinase (ATP) (536 aa).

Residues Arg62, Tyr203, and Lys209 each contribute to the substrate site. ATP contacts are provided by residues Lys209, His228, and 244-252 (GLSGTGKTT). Residues Lys209 and His228 each contribute to the Mn(2+) site. Residue Asp265 coordinates Mn(2+). ATP is bound by residues Glu293, Arg329, 445-446 (RI), and Thr451. Arg329 lines the substrate pocket.

Belongs to the phosphoenolpyruvate carboxykinase (ATP) family. In terms of assembly, monomer. It depends on Mn(2+) as a cofactor.

It is found in the cytoplasm. The enzyme catalyses oxaloacetate + ATP = phosphoenolpyruvate + ADP + CO2. It participates in carbohydrate biosynthesis; gluconeogenesis. In terms of biological role, involved in the gluconeogenesis. Catalyzes the conversion of oxaloacetate (OAA) to phosphoenolpyruvate (PEP) through direct phosphoryl transfer between the nucleoside triphosphate and OAA. This Glaesserella parasuis serovar 5 (strain SH0165) (Haemophilus parasuis) protein is Phosphoenolpyruvate carboxykinase (ATP).